The chain runs to 173 residues: NADH-ubiquinone oxidoreductase chain 6 (173 aa).

Helical transmembrane passes span 1-21, 27-47, 48-68, 87-107, and 139-159; these read MTYF…AVAS, YGVV…LSLG, ASFV…VVFV, VIGY…IGGF, and WGAG…FVVL.

The protein belongs to the complex I subunit 6 family.

The protein resides in the mitochondrion membrane. The enzyme catalyses a ubiquinone + NADH + 5 H(+)(in) = a ubiquinol + NAD(+) + 4 H(+)(out). In terms of biological role, core subunit of the mitochondrial membrane respiratory chain NADH dehydrogenase (Complex I) that is believed to belong to the minimal assembly required for catalysis. Complex I functions in the transfer of electrons from NADH to the respiratory chain. The immediate electron acceptor for the enzyme is believed to be ubiquinone. This Brachyramphus brevirostris (Kittlitz's murrelet) protein is NADH-ubiquinone oxidoreductase chain 6 (MT-ND6).